The following is an 81-amino-acid chain: Three-finger toxin A1 (81 aa).

The N-terminal stretch at 1–21 (MKTLLLTLVVVTIVCLDFGHT) is a signal peptide. 4 disulfides stabilise this stretch: cysteine 24–cysteine 43, cysteine 38–cysteine 60, cysteine 62–cysteine 73, and cysteine 74–cysteine 79.

Belongs to the three-finger toxin family. Short-chain subfamily. Type I alpha-neurotoxin sub-subfamily. Expressed by the venom gland.

It is found in the secreted. Binds and inhibits fetal (alpha-1-beta-1-gamma-delta/CHRNA1-CHRNB1-CHRNG-CHRND, IC(50)=1.4 nM), adult (alpha-1-beta-1-delta-epsilon/CHRNA1-CHRNB1-CHRND-CHRNE, IC(50)=12 nM) and neuronal alpha-7/CHRNA7 (IC(50)=400 nM) nicotinic acetylcholine receptors (nAChR) thereby impairing neuromuscular and neuronal transmissions. This chain is Three-finger toxin A1, found in Micrurus laticollaris (Balsas coral snake).